The primary structure comprises 586 residues: Germ cell nuclear acidic protein (586 aa).

Disordered regions lie at residues 17-119, 176-202, 217-266, and 279-318; these read GWDR…LSSE, KAKT…SPVF, TWRT…SSEE, and LGGR…PVKD. The span at 65-76 shows a compositional bias: basic and acidic residues; the sequence is SGKENRSQEEHI. A compositionally biased stretch (polar residues) spans 94–107; sequence TPKSTFKQSASSAQ. Residues 176–191 show a composition bias toward basic residues; it reads KAKTVKTPKSVQKTKK. Basic and acidic residues predominate over residues 225–244; sequence PPSDEHQATSKDREETEKPR. Residues 299–313 are compositionally biased toward polar residues; it reads CLSTPSATGRKTGSQ. One can recognise a SprT-like domain in the interval 383-482; the sequence is KLYQLYNTSV…LYARKAMLAH (100 aa).

Belongs to the serine-aspartate repeat-containing protein (SDr) family.

The protein localises to the nucleus. Its subcellular location is the PML body. The protein resides in the chromosome. Functionally, may play a role in DNA-protein cross-links (DPCs) clearance, ensuring the genomic stability by protecting germ cells and early embryos from various sources of damage. This chain is Germ cell nuclear acidic protein (gcna), found in Danio rerio (Zebrafish).